Reading from the N-terminus, the 285-residue chain is Methylamine utilization protein MauF (285 aa).

A run of 7 helical transmembrane segments spans residues 39-59 (FIMM…MHST), 60-80 (MSVE…GGLL), 119-139 (YAIG…LLFA), 145-165 (YAVI…FGFL), 188-208 (VIGL…VQTP), 212-232 (IVTG…VIAV), and 265-285 (VEVD…LVML).

The protein localises to the cell membrane. Its pathway is one-carbon metabolism; methylamine degradation. This Methylophilus methylotrophus (Bacterium W3A1) protein is Methylamine utilization protein MauF (mauF).